We begin with the raw amino-acid sequence, 832 residues long: Beta-galactosidase (832 aa).

Positions 1-25 (MALKLVLMLMVALLAAVWSPPAVTA) are cleaved as a signal peptide. Catalysis depends on E183, which acts as the Proton donor. E252 functions as the Nucleophile in the catalytic mechanism. The 92-residue stretch at 741 to 832 (AYGRPKVHLS…KKLAVEAICE (92 aa)) folds into the SUEL-type lectin domain.

The protein belongs to the glycosyl hydrolase 35 family.

Its subcellular location is the secreted. It is found in the extracellular space. The protein resides in the apoplast. The enzyme catalyses Hydrolysis of terminal non-reducing beta-D-galactose residues in beta-D-galactosides.. This is Beta-galactosidase from Asparagus officinalis (Garden asparagus).